Reading from the N-terminus, the 293-residue chain is ATP phosphoribosyltransferase (293 aa).

This sequence belongs to the ATP phosphoribosyltransferase family. Long subfamily. The cofactor is Mg(2+).

It is found in the cytoplasm. It carries out the reaction 1-(5-phospho-beta-D-ribosyl)-ATP + diphosphate = 5-phospho-alpha-D-ribose 1-diphosphate + ATP. It participates in amino-acid biosynthesis; L-histidine biosynthesis; L-histidine from 5-phospho-alpha-D-ribose 1-diphosphate: step 1/9. Feedback inhibited by histidine. Catalyzes the condensation of ATP and 5-phosphoribose 1-diphosphate to form N'-(5'-phosphoribosyl)-ATP (PR-ATP). Has a crucial role in the pathway because the rate of histidine biosynthesis seems to be controlled primarily by regulation of HisG enzymatic activity. This is ATP phosphoribosyltransferase from Nitratidesulfovibrio vulgaris (strain ATCC 29579 / DSM 644 / CCUG 34227 / NCIMB 8303 / VKM B-1760 / Hildenborough) (Desulfovibrio vulgaris).